We begin with the raw amino-acid sequence, 256 residues long: Hydroxyacylglutathione hydrolase (256 aa).

The Zn(2+) site is built by His55, His57, Asp59, His60, His113, Asp132, and His170.

The protein belongs to the metallo-beta-lactamase superfamily. Glyoxalase II family. In terms of assembly, monomer. It depends on Zn(2+) as a cofactor.

The catalysed reaction is an S-(2-hydroxyacyl)glutathione + H2O = a 2-hydroxy carboxylate + glutathione + H(+). The protein operates within secondary metabolite metabolism; methylglyoxal degradation; (R)-lactate from methylglyoxal: step 2/2. Its function is as follows. Thiolesterase that catalyzes the hydrolysis of S-D-lactoyl-glutathione to form glutathione and D-lactic acid. This chain is Hydroxyacylglutathione hydrolase, found in Methylococcus capsulatus (strain ATCC 33009 / NCIMB 11132 / Bath).